The chain runs to 149 residues: UPF0178 protein Sama_3557 (149 aa).

The protein belongs to the UPF0178 family.

The protein is UPF0178 protein Sama_3557 of Shewanella amazonensis (strain ATCC BAA-1098 / SB2B).